The chain runs to 305 residues: tRNA-splicing endonuclease (305 aa).

Residues tyrosine 246, histidine 257, and lysine 287 contribute to the active site.

The protein belongs to the tRNA-intron endonuclease family. Archaeal long subfamily. Homodimer.

The enzyme catalyses pretRNA = a 3'-half-tRNA molecule with a 5'-OH end + a 5'-half-tRNA molecule with a 2',3'-cyclic phosphate end + an intron with a 2',3'-cyclic phosphate and a 5'-hydroxyl terminus.. Functionally, endonuclease that removes tRNA introns. Cleaves pre-tRNA at the 5'- and 3'-splice sites to release the intron. The products are an intron and two tRNA half-molecules bearing 2',3' cyclic phosphate and 5'-OH termini. Recognizes a pseudosymmetric substrate in which 2 bulged loops of 3 bases are separated by a stem of 4 bp. The sequence is that of tRNA-splicing endonuclease from Archaeoglobus fulgidus (strain ATCC 49558 / DSM 4304 / JCM 9628 / NBRC 100126 / VC-16).